The primary structure comprises 408 residues: Phosphopentomutase (408 aa).

Residues D10, D303, H308, D344, H345, and H356 each contribute to the Mn(2+) site.

Belongs to the phosphopentomutase family. Requires Mn(2+) as cofactor.

Its subcellular location is the cytoplasm. It carries out the reaction 2-deoxy-alpha-D-ribose 1-phosphate = 2-deoxy-D-ribose 5-phosphate. The enzyme catalyses alpha-D-ribose 1-phosphate = D-ribose 5-phosphate. The protein operates within carbohydrate degradation; 2-deoxy-D-ribose 1-phosphate degradation; D-glyceraldehyde 3-phosphate and acetaldehyde from 2-deoxy-alpha-D-ribose 1-phosphate: step 1/2. In terms of biological role, isomerase that catalyzes the conversion of deoxy-ribose 1-phosphate (dRib-1-P) and ribose 1-phosphate (Rib-1-P) to deoxy-ribose 5-phosphate (dRib-5-P) and ribose 5-phosphate (Rib-5-P), respectively. This is Phosphopentomutase from Tolumonas auensis (strain DSM 9187 / NBRC 110442 / TA 4).